The following is a 637-amino-acid chain: Serine/threonine protein kinase ypkA (637 aa).

Positions T20–T29 are enriched in low complexity. 2 disordered regions span residues T20–S63 and S104–A140. Polar residues predominate over residues V40 to L61. Over residues S104 to S116 the composition is skewed to low complexity. Positions T117–G136 are enriched in polar residues. A Protein kinase domain is found at F294–F551. Residues V300 to V308 and K323 each bind ATP. Catalysis depends on D417, which acts as the Proton acceptor. In terms of domain architecture, AGC-kinase C-terminal spans A552–A623. A phosphoserine mark is found at S593 and S612. Residue Y613 is modified to Phosphotyrosine.

This sequence belongs to the protein kinase superfamily. Ser/Thr protein kinase family. In terms of assembly, interacts with the sakA MAP kinase.

It carries out the reaction L-seryl-[protein] + ATP = O-phospho-L-seryl-[protein] + ADP + H(+). The catalysed reaction is L-threonyl-[protein] + ATP = O-phospho-L-threonyl-[protein] + ADP + H(+). Its function is as follows. Serine/threonine protein kinase required for vegetative growth and conidiation. Important for fungal survival through the regulation of glycosphingolipid (GSL) biosynthesis and cross talks with MAP kinase pathways such as the cell wall integrity (CWI) and the high osmolarity glycerol (HOG) pathways. This Aspergillus fumigatus (strain ATCC MYA-4609 / CBS 101355 / FGSC A1100 / Af293) (Neosartorya fumigata) protein is Serine/threonine protein kinase ypkA.